Consider the following 238-residue polypeptide: Chromosome partition protein MukE (238 aa).

It belongs to the MukE family. As to quaternary structure, interacts, and probably forms a ternary complex, with MukF and MukB. The complex formation is stimulated by calcium or magnesium.

The protein localises to the cytoplasm. It localises to the nucleoid. Involved in chromosome condensation, segregation and cell cycle progression. May participate in facilitating chromosome segregation by condensation DNA from both sides of a centrally located replisome during cell division. Probably acts via its interaction with MukB and MukF. The protein is Chromosome partition protein MukE of Haemophilus ducreyi (strain 35000HP / ATCC 700724).